Here is a 149-residue protein sequence, read N- to C-terminus: UPF0178 protein Sama_3557 (149 aa).

The protein belongs to the UPF0178 family.

The polypeptide is UPF0178 protein Sama_3557 (Shewanella amazonensis (strain ATCC BAA-1098 / SB2B)).